The primary structure comprises 1325 residues: Lysine-specific demethylase 3A (1325 aa).

Disordered stretches follow at residues S249 to V284, P300 to V333, and Q372 to K399. The segment covering S274–H283 has biased composition (polar residues). Residues S378–S390 are compositionally biased toward low complexity. The segment at C669–C694 adopts a C6-type zinc-finger fold. 2 disordered regions span residues T772–Q791 and P798–V819. The short motif at L888 to L892 is the LXXLL motif element. In terms of domain architecture, JmjC spans M1062–R1285. H1124, D1126, and H1253 together coordinate Fe cation.

The protein belongs to the JHDM2 histone demethylase family. Fe(2+) serves as cofactor.

The protein localises to the cytoplasm. The protein resides in the nucleus. The enzyme catalyses N(6),N(6)-dimethyl-L-lysyl(9)-[histone H3] + 2 2-oxoglutarate + 2 O2 = L-lysyl(9)-[histone H3] + 2 formaldehyde + 2 succinate + 2 CO2. Histone demethylase that specifically demethylates 'Lys-9' of histone H3, thereby playing a central role in histone code. Preferentially demethylates mono- and dimethylated H3 'Lys-9' residue, with a preference for dimethylated residue, while it has weak or no activity on trimethylated H3 'Lys-9'. Demethylation of Lys residue generates formaldehyde and succinate. The chain is Lysine-specific demethylase 3A (KDM3A) from Gallus gallus (Chicken).